The chain runs to 263 residues: Proteasome subunit alpha (263 aa).

The segment at 229–263 (AALLQDTPPDDADADADAGKKPANDGNLPPNDDKS) is disordered.

The protein belongs to the peptidase T1A family. In terms of assembly, the 20S proteasome core is composed of 14 alpha and 14 beta subunits that assemble into four stacked heptameric rings, resulting in a barrel-shaped structure. The two inner rings, each composed of seven catalytic beta subunits, are sandwiched by two outer rings, each composed of seven alpha subunits. The catalytic chamber with the active sites is on the inside of the barrel. Has a gated structure, the ends of the cylinder being occluded by the N-termini of the alpha-subunits. Is capped by the proteasome-associated ATPase, ARC.

The protein resides in the cytoplasm. Its pathway is protein degradation; proteasomal Pup-dependent pathway. With respect to regulation, the formation of the proteasomal ATPase ARC-20S proteasome complex, likely via the docking of the C-termini of ARC into the intersubunit pockets in the alpha-rings, may trigger opening of the gate for substrate entry. Interconversion between the open-gate and close-gate conformations leads to a dynamic regulation of the 20S proteasome proteolysis activity. In terms of biological role, component of the proteasome core, a large protease complex with broad specificity involved in protein degradation. The polypeptide is Proteasome subunit alpha (Actinosynnema mirum (strain ATCC 29888 / DSM 43827 / JCM 3225 / NBRC 14064 / NCIMB 13271 / NRRL B-12336 / IMRU 3971 / 101)).